The sequence spans 622 residues: 1-deoxy-D-xylulose-5-phosphate synthase (622 aa).

Thiamine diphosphate contacts are provided by residues histidine 80 and 121 to 123; that span reads GHS. Aspartate 152 serves as a coordination point for Mg(2+). Thiamine diphosphate is bound by residues 153 to 154, asparagine 181, tyrosine 288, and glutamate 370; that span reads GA. Asparagine 181 lines the Mg(2+) pocket.

This sequence belongs to the transketolase family. DXPS subfamily. Homodimer. Requires Mg(2+) as cofactor. Thiamine diphosphate is required as a cofactor.

It catalyses the reaction D-glyceraldehyde 3-phosphate + pyruvate + H(+) = 1-deoxy-D-xylulose 5-phosphate + CO2. Its pathway is metabolic intermediate biosynthesis; 1-deoxy-D-xylulose 5-phosphate biosynthesis; 1-deoxy-D-xylulose 5-phosphate from D-glyceraldehyde 3-phosphate and pyruvate: step 1/1. Functionally, catalyzes the acyloin condensation reaction between C atoms 2 and 3 of pyruvate and glyceraldehyde 3-phosphate to yield 1-deoxy-D-xylulose-5-phosphate (DXP). This chain is 1-deoxy-D-xylulose-5-phosphate synthase, found in Shewanella amazonensis (strain ATCC BAA-1098 / SB2B).